The primary structure comprises 293 residues: Probable porphobilinogen deaminase (293 aa).

C233 is subject to S-(dipyrrolylmethanemethyl)cysteine.

It belongs to the HMBS family. Dipyrromethane serves as cofactor.

The enzyme catalyses 4 porphobilinogen + H2O = hydroxymethylbilane + 4 NH4(+). It participates in porphyrin-containing compound metabolism; protoporphyrin-IX biosynthesis; coproporphyrinogen-III from 5-aminolevulinate: step 2/4. Its function is as follows. Tetrapolymerization of the monopyrrole PBG into the hydroxymethylbilane pre-uroporphyrinogen in several discrete steps. The sequence is that of Probable porphobilinogen deaminase from Saccharolobus islandicus (strain L.S.2.15 / Lassen #1) (Sulfolobus islandicus).